The following is a 395-amino-acid chain: Vacuolar protease A (395 aa).

A signal peptide spans M1–A18. The propeptide at K19 to E72 is activation peptide. Residues Y87–A392 form the Peptidase A1 domain. Residue D105 is part of the active site. The cysteines at positions 118 and 123 are disulfide-linked. N140 carries an N-linked (GlcNAc...) asparagine glycan. The active site involves D289. A disulfide bridge links C318 with C351. N-linked (GlcNAc...) asparagine glycosylation is present at N335.

It belongs to the peptidase A1 family.

The protein resides in the vacuole lumen. Its subcellular location is the secreted. The enzyme catalyses Hydrolysis of proteins with broad specificity for peptide bonds. Cleaves -Leu-Leu-|-Val-Tyr- bond in a synthetic substrate. Does not act on esters of Tyr or Arg.. Functionally, vacuolar aspartic endopeptidase which is probably also secreted and contributes to virulence. In Arthroderma otae (strain ATCC MYA-4605 / CBS 113480) (Microsporum canis), this protein is Vacuolar protease A (PEP2).